The sequence spans 120 residues: Fumarate reductase subunit D (120 aa).

The next 3 helical transmembrane spans lie at 25–45 (FAML…LGIL), 57–77 (GFVT…LPMW), and 100–120 (IACY…VFMI).

The protein belongs to the FrdD family. As to quaternary structure, part of an enzyme complex containing four subunits: a flavoprotein (FrdA), an iron-sulfur protein (FrdB), and two hydrophobic anchor proteins (FrdC and FrdD).

Its subcellular location is the cell inner membrane. Anchors the catalytic components of the fumarate reductase complex to the cell membrane, binds quinones. This chain is Fumarate reductase subunit D, found in Photobacterium profundum (strain SS9).